A 424-amino-acid polypeptide reads, in one-letter code: Glutamate-1-semialdehyde 2,1-aminomutase (424 aa).

An N6-(pyridoxal phosphate)lysine modification is found at Lys-264.

The protein belongs to the class-III pyridoxal-phosphate-dependent aminotransferase family. HemL subfamily. As to quaternary structure, homodimer. The cofactor is pyridoxal 5'-phosphate.

It localises to the cytoplasm. The catalysed reaction is (S)-4-amino-5-oxopentanoate = 5-aminolevulinate. It functions in the pathway porphyrin-containing compound metabolism; protoporphyrin-IX biosynthesis; 5-aminolevulinate from L-glutamyl-tRNA(Glu): step 2/2. This Aquifex aeolicus (strain VF5) protein is Glutamate-1-semialdehyde 2,1-aminomutase (hemL).